The primary structure comprises 40 residues: Large ribosomal subunit protein bL36 (40 aa).

This sequence belongs to the bacterial ribosomal protein bL36 family.

In Corynebacterium diphtheriae (strain ATCC 700971 / NCTC 13129 / Biotype gravis), this protein is Large ribosomal subunit protein bL36.